The primary structure comprises 120 residues: uncharacterized protein (120 aa).

A helical transmembrane segment spans residues 40-62; that stretch reads SFLTDALLNLIYILFFSSSVFNW.

The protein localises to the membrane. This is an uncharacterized protein from Saccharomyces cerevisiae (strain ATCC 204508 / S288c) (Baker's yeast).